The chain runs to 249 residues: 3-deoxy-D-manno-octulosonic acid kinase (249 aa).

D175 is an active-site residue.

This sequence belongs to the protein kinase superfamily. KdkA/RfaP family.

The protein localises to the cell inner membrane. The enzyme catalyses an alpha-Kdo-(2-&gt;6)-lipid IVA + ATP = a 4-O-phospho-alpha-Kdo-(2-&gt;6)-lipid IVA + ADP + H(+). The protein operates within bacterial outer membrane biogenesis; LPS core biosynthesis. Functionally, catalyzes the ATP-dependent phosphorylation of the 3-deoxy-D-manno-octulosonic acid (Kdo) residue in Kdo-lipid IV(A) at the 4-OH position. This is 3-deoxy-D-manno-octulosonic acid kinase from Xanthomonas oryzae pv. oryzae (strain PXO99A).